Consider the following 301-residue polypeptide: Phosducin-like protein (301 aa).

T2 bears the N-acetylthreonine mark. Residues 17 to 60 (YSTSEDEDSDHEDKDRGRGAPAISSTPAEAELAGEGISINTGPK) are disordered. 5 positions are modified to phosphoserine: S20, S25, S226, S293, and S296. The Phosducin domain occupies 36 to 299 (APAISSTPAE…TCHSEDSDLE (264 aa)). Residues 158–301 (FKQVFEIPSG…HSEDSDLEID (144 aa)) form a thioredoxin fold region.

The protein belongs to the phosducin family. Forms a complex with the beta and gamma subunits of the GTP-binding protein, transducin. Interacts with the CCT chaperonin complex.

The protein localises to the cell projection. It localises to the cilium. Its function is as follows. Functions as a co-chaperone for CCT in the assembly of heterotrimeric G protein complexes, facilitates the assembly of both Gbeta-Ggamma and RGS-Gbeta5 heterodimers. Also acts as a positive regulator of hedgehog signaling and regulates ciliary function. In Mus musculus (Mouse), this protein is Phosducin-like protein (Pdcl).